The following is a 407-amino-acid chain: Proteasomal ubiquitin receptor ADRM1 (407 aa).

Thr2 is modified (N-acetylthreonine). Ser15 is subject to Phosphoserine. Residues 18-131 (ASNKYLVEFR…RKVNEYLNNP (114 aa)) form the Pru domain. Residue Lys34 forms a Glycyl lysine isopeptide (Lys-Gly) (interchain with G-Cter in ubiquitin) linkage. Tyr127 is subject to Phosphotyrosine. Ser140 and Ser211 each carry phosphoserine. 2 disordered regions span residues 194-259 (LLGS…ASPT) and 379-407 (KAMQ…MSLD). The residue at position 217 (Thr217) is a Phosphothreonine. An interaction with UCHL5 region spans residues 253–407 (STAASPTQPI…KDEEEDMSLD (155 aa)). One can recognise a DEUBAD domain in the interval 277 to 391 (PAGPAGGQQV…QNNAKPEQKE (115 aa)). Residues 387–398 (PEQKEGDTKDKK) show a composition bias toward basic and acidic residues. Ser405 carries the phosphoserine modification.

This sequence belongs to the ADRM1 family. As to quaternary structure, component of the 19S proteasome regulatory particle complex. The 26S proteasome consists of a 20S core particle (CP) and two 19S regulatory subunits (RP). Interacts with the proteasomal scaffolding protein PSMD1. Interacts with deubiquitinase UCHL5; this interaction activates the auto-inhibited UCHL5 by deoligomerizing it. Interacts with UBQLN2 and ubiquitin. Post-translationally, ubiquitinated by UBE3C in response to proteotoxic stress.

The protein resides in the cytoplasm. It is found in the nucleus. Its function is as follows. Component of the 26S proteasome, a multiprotein complex involved in the ATP-dependent degradation of ubiquitinated proteins. This complex plays a key role in the maintenance of protein homeostasis by removing misfolded or damaged proteins, which could impair cellular functions, and by removing proteins whose functions are no longer required. Therefore, the proteasome participates in numerous cellular processes, including cell cycle progression, apoptosis, or DNA damage repair. Within the complex, functions as a proteasomal ubiquitin receptor. Engages and activates 19S-associated deubiquitinases UCHL5 and PSMD14 during protein degradation. UCHL5 reversibly associate with the 19S regulatory particle whereas PSMD14 is an intrinsic subunit of the proteasome lid subcomplex. The polypeptide is Proteasomal ubiquitin receptor ADRM1 (ADRM1) (Homo sapiens (Human)).